Here is a 446-residue protein sequence, read N- to C-terminus: Probable 1,4-beta-D-glucan cellobiohydrolase A (446 aa).

The first 17 residues, 1–17 (MYQRALLFSALLSVSRA), serve as a signal peptide directing secretion. An N-linked (GlcNAc...) asparagine glycan is attached at Asn-81. Residue Glu-226 is the Nucleophile of the active site. Glu-231 functions as the Proton donor in the catalytic mechanism. N-linked (GlcNAc...) asparagine glycans are attached at residues Asn-284 and Asn-333. A disordered region spans residues 399-420 (TDADPSQPGVARGTCEQGAGDP).

Belongs to the glycosyl hydrolase 7 (cellulase C) family.

The protein localises to the secreted. The enzyme catalyses Hydrolysis of (1-&gt;4)-beta-D-glucosidic linkages in cellulose and cellotetraose, releasing cellobiose from the non-reducing ends of the chains.. Its function is as follows. The biological conversion of cellulose to glucose generally requires three types of hydrolytic enzymes: (1) Endoglucanases which cut internal beta-1,4-glucosidic bonds; (2) Exocellobiohydrolases that cut the disaccharide cellobiose from the non-reducing end of the cellulose polymer chain; (3) Beta-1,4-glucosidases which hydrolyze the cellobiose and other short cello-oligosaccharides to glucose. This Emericella nidulans (strain FGSC A4 / ATCC 38163 / CBS 112.46 / NRRL 194 / M139) (Aspergillus nidulans) protein is Probable 1,4-beta-D-glucan cellobiohydrolase A (cbhA).